The chain runs to 199 residues: Recombination protein RecR (199 aa).

The segment at 57 to 72 (CQSCRTFTEQDLCPIC) adopts a C4-type zinc-finger fold. Residues 81–176 (GIICVVETPA…VISRIAHGVP (96 aa)) enclose the Toprim domain.

Belongs to the RecR family.

Its function is as follows. May play a role in DNA repair. It seems to be involved in an RecBC-independent recombinational process of DNA repair. It may act with RecF and RecO. This chain is Recombination protein RecR, found in Shewanella frigidimarina (strain NCIMB 400).